Reading from the N-terminus, the 97-residue chain is Small ribosomal subunit protein bS16c (97 aa).

The protein belongs to the bacterial ribosomal protein bS16 family.

The protein resides in the plastid. Its subcellular location is the chloroplast. The sequence is that of Small ribosomal subunit protein bS16c from Piper cenocladum (Ant piper).